A 303-amino-acid chain; its full sequence is Heme A synthase (303 aa).

Over 1 to 8 (MFGKKNLK) the chain is Cytoplasmic. A helical membrane pass occupies residues 9–29 (WLGVVATLMMTFVQLGGALVT). Residues 30-67 (KTGSADGCGSSWPLCHGALIPEFFPIDTIIELSHRAVS) lie on the Extracellular side of the membrane. C37 and C44 are joined by a disulfide. E60 is an active-site residue. H63 serves as a coordination point for heme o. Residues 68-88 (ALSLLMVLWLVITAWKHIGYI) form a helical membrane-spanning segment. Over 89-93 (KEIKP) the chain is Cytoplasmic. A helical membrane pass occupies residues 94–114 (LSIISVGFLLLQALIGAAAVI). Topologically, residues 115–125 (WQQNDYVLALH) are extracellular. H125 contacts heme o. A helical membrane pass occupies residues 126-146 (FGISLISFSSVFLITLIIFSI). Residues 147–163 (DQKYEAAELYIKKPLRR) are Cytoplasmic-facing. A helical membrane pass occupies residues 164–184 (LTWLMAIIIYCGVYTGALVRH). Over 185–215 (ADASLAYGGWPLPFHDLVPHSEQDWVQLTHR) the chain is Extracellular. H214 contacts heme b. The chain crosses the membrane as a helical span at residues 216-236 (IMAFIVFTIIMITYIHAVKNY). The Cytoplasmic segment spans residues 237 to 244 (PNNRTVHY). Residues 245–265 (GYTAAFILVILQVITGALSIM) traverse the membrane as a helical segment. The Extracellular portion of the chain corresponds to 266-270 (TNVNL). A helical transmembrane segment spans residues 271–291 (IIALFHALFITYLFGMTTYFI). A heme b-binding site is contributed by H276. Residues 292 to 303 (MLMLRSVRSDKQ) are Cytoplasmic-facing.

It belongs to the COX15/CtaA family. Type 1 subfamily. As to quaternary structure, interacts with CtaB. Heme b serves as cofactor.

Its subcellular location is the cell membrane. The enzyme catalyses Fe(II)-heme o + 2 A + H2O = Fe(II)-heme a + 2 AH2. It functions in the pathway porphyrin-containing compound metabolism; heme A biosynthesis; heme A from heme O: step 1/1. Functionally, catalyzes the conversion of heme O to heme A by two successive hydroxylations of the methyl group at C8. The first hydroxylation forms heme I, the second hydroxylation results in an unstable dihydroxymethyl group, which spontaneously dehydrates, resulting in the formyl group of heme A. In Staphylococcus aureus (strain bovine RF122 / ET3-1), this protein is Heme A synthase.